The chain runs to 463 residues: Chaperone SurA (463 aa).

The signal sequence occupies residues 1-25 (MTRYFSIVLSLLLAVSCVFLPVASA). PpiC domains lie at 175–277 (GAQY…KLVE) and 291–390 (ATEY…QRLG). Residues 439 to 463 (ADDHHTPSAAVTPATGAVLPAATKH) are disordered.

Its subcellular location is the periplasm. It carries out the reaction [protein]-peptidylproline (omega=180) = [protein]-peptidylproline (omega=0). Its function is as follows. Chaperone involved in the correct folding and assembly of outer membrane proteins. Recognizes specific patterns of aromatic residues and the orientation of their side chains, which are found more frequently in integral outer membrane proteins. May act in both early periplasmic and late outer membrane-associated steps of protein maturation. This chain is Chaperone SurA, found in Xylella fastidiosa (strain Temecula1 / ATCC 700964).